The chain runs to 89 residues: Large ribosomal subunit protein bL27 (89 aa).

Residues 1 to 24 (MAHKKGTGSTRNGRDSNSKRLGVK) are disordered.

Belongs to the bacterial ribosomal protein bL27 family.

In Synechococcus sp. (strain WH7803), this protein is Large ribosomal subunit protein bL27.